Here is a 539-residue protein sequence, read N- to C-terminus: Putative cysteine ligase BshC (539 aa).

A coiled-coil region spans residues 249–270; sequence VETNDEVTNRLNESQAAMKRAG.

It belongs to the BshC family.

Functionally, involved in bacillithiol (BSH) biosynthesis. May catalyze the last step of the pathway, the addition of cysteine to glucosamine malate (GlcN-Mal) to generate BSH. This is Putative cysteine ligase BshC from Bacillus pumilus (strain SAFR-032).